A 70-amino-acid chain; its full sequence is DNA-directed RNA polymerase subunit epsilon (70 aa).

It belongs to the RNA polymerase subunit epsilon family. In terms of assembly, RNAP is composed of a core of 2 alpha, a beta and a beta' subunit. The core is associated with a delta subunit, and at least one of epsilon or omega. When a sigma factor is associated with the core the holoenzyme is formed, which can initiate transcription.

It carries out the reaction RNA(n) + a ribonucleoside 5'-triphosphate = RNA(n+1) + diphosphate. Functionally, a non-essential component of RNA polymerase (RNAP). The sequence is that of DNA-directed RNA polymerase subunit epsilon from Bacillus cytotoxicus (strain DSM 22905 / CIP 110041 / 391-98 / NVH 391-98).